Consider the following 480-residue polypeptide: MSPQTETKASVGFKAGVKDYKLTYYTPDYETKDTDILAAFRVTPQPGVPPEEAGAAVAAESSTGTWTTVWTDGLTSLDRYKGRCYHIEVVVGEENQYIAYVAYPLDLFEEGSVTNMFTSIVGNVFGFKALRALRLEDLRIPPSYSKTFQGPPHGIQVERDKLNKYGRPLLGCTIKPKLGLSAKNYGRAVYECLRGGLDFTKDDENVNSQPFMRWRDRFLFCAEAIYKAQAETGEIKGHYLNATAGTCEEMIKRAVFARELGVPIVMHDYLTGGFTANTSLAHYCRDNGLLLHIHRAMHAVIDRQKNHGMHFRVLAKALRMSGGDHIHAGTVVGKLEGEREMTLGFVDLLRDDYIEKDRSRGIFFTQDWVSMPGVIPVASGGIHVWHMPALTEIFGDDSVLQFGGGTLGHPWGNAPGAVANRVALEACVQARNEGRDLAREGNDIIREASKWSPELAAACEVWKEITFDFDPVDKPDIEAK.

Residues 1–2 (MS) constitute a propeptide that is removed on maturation. An N-acetylproline modification is found at Pro3. Position 14 is an N6,N6,N6-trimethyllysine (Lys14). Substrate-binding residues include Asn123 and Thr173. The active-site Proton acceptor is Lys175. Lys177 lines the substrate pocket. Lys201, Asp203, and Glu204 together coordinate Mg(2+). Lys201 is modified (N6-carboxylysine). His294 functions as the Proton acceptor in the catalytic mechanism. Substrate contacts are provided by Arg295, His327, and Ser379.

This sequence belongs to the RuBisCO large chain family. Type I subfamily. In terms of assembly, heterohexadecamer of 8 large chains and 8 small chains; disulfide-linked. The disulfide link is formed within the large subunit homodimers. It depends on Mg(2+) as a cofactor. Post-translationally, the disulfide bond which can form in the large chain dimeric partners within the hexadecamer appears to be associated with oxidative stress and protein turnover.

The protein localises to the plastid. It localises to the chloroplast. It carries out the reaction 2 (2R)-3-phosphoglycerate + 2 H(+) = D-ribulose 1,5-bisphosphate + CO2 + H2O. It catalyses the reaction D-ribulose 1,5-bisphosphate + O2 = 2-phosphoglycolate + (2R)-3-phosphoglycerate + 2 H(+). Its function is as follows. RuBisCO catalyzes two reactions: the carboxylation of D-ribulose 1,5-bisphosphate, the primary event in carbon dioxide fixation, as well as the oxidative fragmentation of the pentose substrate in the photorespiration process. Both reactions occur simultaneously and in competition at the same active site. The protein is Ribulose bisphosphate carboxylase large chain of Phalaenopsis aphrodite subsp. formosana (Moth orchid).